We begin with the raw amino-acid sequence, 203 residues long: Tic20 family protein Ycf60 (203 aa).

The next 5 helical transmembrane spans lie at 2 to 22 (IRLFTFGIITMLVLVIARLAI), 51 to 71 (IIPYYLPLFEGLQNFGQYVLP), 84 to 104 (ILLPMLIFYMNHAILGLVTFF), 131 to 151 (ILLFLVGSLFGAIFRAFPIEF), and 153 to 173 (ISFIGLTVCNMMFWFILSTIT).

Belongs to the Tic20 family.

The protein localises to the plastid. It is found in the chloroplast membrane. The protein is Tic20 family protein Ycf60 (ycf60) of Porphyra purpurea (Red seaweed).